Here is a 548-residue protein sequence, read N- to C-terminus: Biotin-dependent acetyl-/propionyl-coenzyme A carboxylase beta5 subunit (548 aa).

Residues 1–23 (MTSVTDRSAHSAERSTEHTIDIH) form a disordered region. A compositionally biased stretch (basic and acidic residues) spans 7-21 (RSAHSAERSTEHTID). The region spanning 25–281 (TAGKLAELHK…NNSTDAPRYQ (257 aa)) is the CoA carboxyltransferase N-terminal domain. The 247-residue stretch at 295-541 (DEDLELDTLI…ERKIAQLPPK (247 aa)) folds into the CoA carboxyltransferase C-terminal domain.

Belongs to the AccD/PCCB family. The biotin-dependent acyl-CoA carboxylase complex is composed of AccA3, which contains the biotin carboxylase (BC) and biotin carboxyl carrier protein (BCCP) domains, and AccD5, which contains the carboxyl transferase (CT) domain.

It catalyses the reaction N(6)-carboxybiotinyl-L-lysyl-[protein] + acetyl-CoA = N(6)-biotinyl-L-lysyl-[protein] + malonyl-CoA. The enzyme catalyses N(6)-carboxybiotinyl-L-lysyl-[protein] + propanoyl-CoA = methylmalonyl-CoA + N(6)-biotinyl-L-lysyl-[protein]. The protein operates within lipid metabolism; mycolic acid biosynthesis. Functionally, component of a biotin-dependent acyl-CoA carboxylase complex. This subunit transfers the CO2 from carboxybiotin to the CoA ester substrate. When associated with the alpha3 subunit AccA3, is involved in the carboxylation of acetyl-CoA and propionyl-CoA. This is Biotin-dependent acetyl-/propionyl-coenzyme A carboxylase beta5 subunit (accD5) from Mycobacterium tuberculosis (strain CDC 1551 / Oshkosh).